The following is a 560-amino-acid chain: Serine/threonine-protein kinase TOS3 (560 aa).

The region spanning Phe-50–Met-344 is the Protein kinase domain. Residues Leu-56 to Val-64 and Lys-79 contribute to the ATP site. Residue Asp-189 is the Proton acceptor of the active site.

It belongs to the protein kinase superfamily. Ser/Thr protein kinase family. Autophosphorylated.

The enzyme catalyses L-seryl-[protein] + ATP = O-phospho-L-seryl-[protein] + ADP + H(+). The catalysed reaction is L-threonyl-[protein] + ATP = O-phospho-L-threonyl-[protein] + ADP + H(+). Functionally, one of the three SNF1 protein kinases (with SAK1 and ELM1) which are required for growth on nonfermentable carbon sources and nonpreferred sugars and for response to environmental stress. Activates SNF1 by phosphorylation of its activation-loop 'Thr-210'. Required for the regulation by SNF1 of the transcription of a large set of genes, the modification the activity of metabolic enzymes, and the control of various nutrient-responsive cellular developmental processes. Also phosphorylates GAL83, MIG1 and SIP2. This chain is Serine/threonine-protein kinase TOS3 (TOS3), found in Saccharomyces cerevisiae (strain ATCC 204508 / S288c) (Baker's yeast).